We begin with the raw amino-acid sequence, 138 residues long: Brain natriuretic peptide (138 aa).

A signal peptide spans 1–22 (MRLSSMWLCSLLLILKLQLSST). 2 disordered regions span residues 50–84 (EQMA…AGLD) and 99–138 (SVRN…PKQR). An intrachain disulfide couples Cys-111 to Cys-127.

Belongs to the natriuretic peptide family.

The protein localises to the secreted. Cardiac hormone which may function as a paracrine antifibrotic factor in the heart. Also plays a key role in cardiovascular homeostasis through natriuresis, diuresis, vasorelaxation, and inhibition of renin and aldosterone secretion. This is Brain natriuretic peptide (nppb) from Oreochromis mossambicus (Mozambique tilapia).